Consider the following 398-residue polypeptide: 1-deoxy-D-xylulose 5-phosphate reductoisomerase (398 aa).

NADPH contacts are provided by Thr11, Gly12, Ser13, Ile14, and Asn125. A 1-deoxy-D-xylulose 5-phosphate-binding site is contributed by Lys126. Glu127 is a binding site for NADPH. Asp151 contributes to the Mn(2+) binding site. Ser152, Glu153, Ser186, and His209 together coordinate 1-deoxy-D-xylulose 5-phosphate. Residue Glu153 participates in Mn(2+) binding. Gly215 contributes to the NADPH binding site. 1-deoxy-D-xylulose 5-phosphate is bound by residues Ser222, Asn227, Lys228, and Glu231. Glu231 contributes to the Mn(2+) binding site.

The protein belongs to the DXR family. Mg(2+) serves as cofactor. Mn(2+) is required as a cofactor.

It catalyses the reaction 2-C-methyl-D-erythritol 4-phosphate + NADP(+) = 1-deoxy-D-xylulose 5-phosphate + NADPH + H(+). Its pathway is isoprenoid biosynthesis; isopentenyl diphosphate biosynthesis via DXP pathway; isopentenyl diphosphate from 1-deoxy-D-xylulose 5-phosphate: step 1/6. Catalyzes the NADPH-dependent rearrangement and reduction of 1-deoxy-D-xylulose-5-phosphate (DXP) to 2-C-methyl-D-erythritol 4-phosphate (MEP). The polypeptide is 1-deoxy-D-xylulose 5-phosphate reductoisomerase (Acinetobacter baumannii (strain AB307-0294)).